The following is an 898-amino-acid chain: Methionine--tRNA ligase, cytoplasmic (898 aa).

The GST C-terminal domain occupies 74–198 (GWEQDDLTNQ…VLKQQGVLAL (125 aa)). The 'HIGH' region signature appears at 273-283 (PYVNNVPHLGN). The 'KMSKS' region signature appears at 593 to 597 (KFSKS). ATP is bound at residue K596. S825 is subject to Phosphoserine. Phosphothreonine is present on T833. One can recognise a WHEP-TRS domain in the interval 839 to 895 (QIQALTEEVTKQGNIVRELKAQKADKNQIAAEVAKLLDLKKQLALAEGKPLETSKGK).

The protein belongs to the class-I aminoacyl-tRNA synthetase family. In terms of assembly, monomer. Part of a multisubunit complex that groups tRNA ligases for Arg (RARS1), Asp (DARS1), Gln (QARS1), Ile (IARS1), Leu (LARS1), Lys (KARS1), Met (MARS1) the bifunctional ligase for Glu and Pro (EPRS1) and the auxiliary subunits AIMP1/p43, AIMP2/p38 and EEF1E1/p18. Forms a linear complex that contains MARS1, EEF1E1, EPRS1 and AIMP2 that is at the core of the multisubunit complex.

The protein resides in the cytoplasm. The protein localises to the cytosol. It localises to the nucleus. It is found in the nucleolus. The enzyme catalyses tRNA(Met) + L-methionine + ATP = L-methionyl-tRNA(Met) + AMP + diphosphate. Catalyzes the specific attachment of an amino acid to its cognate tRNA in a 2 step reaction: the amino acid (AA) is first activated by ATP to form AA-AMP and then transferred to the acceptor end of the tRNA. Plays a role in the synthesis of ribosomal RNA in the nucleolus. In Bos taurus (Bovine), this protein is Methionine--tRNA ligase, cytoplasmic (MARS1).